We begin with the raw amino-acid sequence, 260 residues long: MQFPHIDPVFFRLGHLEFRWYGLMYILGFIAAYFIVRRAAGRRGLALTQDDVADVIFSLAIGVILGGRLGYILFYNLSYYLSHPLKLFAVWEGGMSFHGGLLGVILAGVYVARQKKIGFPVLADICAPAAPVGLGLGRLGNFINGELYGRVTDVPWGIIFPGGGGVPRHPSQLYEAVLEGPVLFLILMAVGRRERPAGVVFWTFIAFYGLFRFLVEFFREPDAQLGLLAGPFSMGQLLSFPMFLLGLTMAVLVSRRKVGP.

Transmembrane regions (helical) follow at residues 16–36, 55–75, and 87–107; these read LEFRWYGLMYILGFIAAYFIV, VIFSLAIGVILGGRLGYILFY, and LFAVWEGGMSFHGGLLGVILA. A 1,2-diacyl-sn-glycero-3-phospho-(1'-sn-glycerol) is bound at residue R138. 2 helical membrane-spanning segments follow: residues 198 to 218 and 232 to 252; these read GVVFWTFIAFYGLFRFLVEFF and FSMGQLLSFPMFLLGLTMAVL.

The protein belongs to the Lgt family.

It is found in the cell inner membrane. It catalyses the reaction L-cysteinyl-[prolipoprotein] + a 1,2-diacyl-sn-glycero-3-phospho-(1'-sn-glycerol) = an S-1,2-diacyl-sn-glyceryl-L-cysteinyl-[prolipoprotein] + sn-glycerol 1-phosphate + H(+). Its pathway is protein modification; lipoprotein biosynthesis (diacylglyceryl transfer). Functionally, catalyzes the transfer of the diacylglyceryl group from phosphatidylglycerol to the sulfhydryl group of the N-terminal cysteine of a prolipoprotein, the first step in the formation of mature lipoproteins. In Geobacter sulfurreducens (strain ATCC 51573 / DSM 12127 / PCA), this protein is Phosphatidylglycerol--prolipoprotein diacylglyceryl transferase.